The following is a 510-amino-acid chain: Histidine ammonia-lyase (510 aa).

Positions 143 to 145 (ASG) form a cross-link, 5-imidazolinone (Ala-Gly). Residue Ser-144 is modified to 2,3-didehydroalanine (Ser).

Belongs to the PAL/histidase family. In terms of processing, contains an active site 4-methylidene-imidazol-5-one (MIO), which is formed autocatalytically by cyclization and dehydration of residues Ala-Ser-Gly.

The protein localises to the cytoplasm. The enzyme catalyses L-histidine = trans-urocanate + NH4(+). The protein operates within amino-acid degradation; L-histidine degradation into L-glutamate; N-formimidoyl-L-glutamate from L-histidine: step 1/3. This is Histidine ammonia-lyase from Shewanella pealeana (strain ATCC 700345 / ANG-SQ1).